The following is a 240-amino-acid chain: uncharacterized protein (240 aa).

Transmembrane regions (helical) follow at residues 16–36 (AVFFLYAALAIIGFAIGYFIP) and 67–87 (FITALLGMCAGIWFAHSVIAM).

The protein resides in the cell membrane. This is an uncharacterized protein from Bacillus subtilis (strain 168).